The primary structure comprises 497 residues: Cysteine-rich secretory protein LCCL domain-containing 2 (497 aa).

The N-terminal stretch at 1 to 22 is a signal peptide; sequence MSCVLGGVIPLGLLFLVCGSQG. A glycan (N-linked (GlcNAc...) asparagine) is linked at Asn27. One can recognise an SCP domain in the interval 62–200; that stretch reads LHNKLRGQVQ…ENAVYFVCNY (139 aa). LCCL domains follow at residues 284 to 379 and 385 to 488; these read MTQV…SSSF and KVQD…RDGK. Disulfide bonds link Cys290–Cys308, Cys312–Cys332, Cys391–Cys413, and Cys417–Cys440.

It belongs to the CRISP family. As to quaternary structure, binds to heparin, dermatan sulfate and chondroitin sulfate.

It is found in the secreted. In terms of biological role, promotes matrix assembly. The protein is Cysteine-rich secretory protein LCCL domain-containing 2 (CRISPLD2) of Homo sapiens (Human).